A 215-amino-acid chain; its full sequence is Cytidylate kinase (215 aa).

An ATP-binding site is contributed by 10–18; sequence GPAAAGKST.

The protein belongs to the cytidylate kinase family. Type 1 subfamily.

The protein localises to the cytoplasm. The enzyme catalyses CMP + ATP = CDP + ADP. It carries out the reaction dCMP + ATP = dCDP + ADP. The protein is Cytidylate kinase of Staphylococcus epidermidis (strain ATCC 35984 / DSM 28319 / BCRC 17069 / CCUG 31568 / BM 3577 / RP62A).